We begin with the raw amino-acid sequence, 420 residues long: Reticulon-4 receptor-like 2 (420 aa).

The signal sequence occupies residues 1–30; it reads MLPGLRRLLQGPASACLLLTLLALPPVTPS. Disulfide bonds link C31-C37 and C35-C46. The LRRNT domain occupies 31–60; sequence CPMLCTCYSSPPTVSCQANNFSSVPLSLPP. N50 carries an N-linked (GlcNAc...) asparagine glycan. 8 LRR repeats span residues 61 to 82, 83 to 104, 107 to 129, 132 to 153, 156 to 177, 180 to 201, 204 to 225, and 228 to 249; these read STQRLFLQNNLIRSLRPGTFGP, NLLTLWLFSNNLSTIYPGTFRH, ALEELDLGDNRHLRSLEPDTFQG, RLQSLHLYRCQLSSLPGNIFRG, SLQYLYLQENSLLHLQDDLFAD, NLSHLFLHGNRLRLLTEHVFRG, SLDRLLLHGNRLQGVHRAAFHG, and RLTILYLFNNSLASLPGEALAD. N93 carries N-linked (GlcNAc...) asparagine glycosylation. N236 carries N-linked (GlcNAc...) asparagine glycosylation. One can recognise an LRRCT domain in the interval 261 to 312; the sequence is NPWACDCRARPLWAWFQRARVSSSDVTCATPPERQGRDLRTLRDTDFQACPP. Intrachain disulfides connect C265/C288 and C267/C310. The tract at residues 286-390 is disordered; sequence VTCATPPERQ…GEQTCPGAAC (105 aa). Residues 294–306 are compositionally biased toward basic and acidic residues; sequence RQGRDLRTLRDTD. The segment at 315–327 is important for interaction with MAG; the sequence is PTRPGSRARGNSS. Positions 351-360 are enriched in basic and acidic residues; the sequence is LPAEDSRGRQ. A lipid anchor (GPI-anchor amidated cysteine) is attached at C390. Positions 391-420 are cleaved as a propeptide — removed in mature form; the sequence is QAPADSRGPVLSAGLRTPLLCLLLLAPHHL.

It belongs to the Nogo receptor family. In terms of assembly, interaction with MAG is controversial, and may be indirect. Interacts with MAG. Does not interact with OMG and RTN4. Post-translationally, undergoes zinc metalloproteinase-mediated ectodomain shedding in neuroblastoma cells; is released both as a full-length ectodomain and an N-terminal fragment containing the leucine-rich repeat (LRR) region of the protein. In terms of processing, N-glycosylated. O-glycosylated. Contains terminal sialic acid groups on its glycan chains. As to expression, detected in adult brain, in neocortex, hippocampus, striatum and dorsal root ganglion neurons, and in retina (at protein level). In brain, detected in cerebral cortex and hippocampus. Weak or no expression detected in the cerebellum, thalamus or striatum.

It is found in the cell membrane. Its subcellular location is the cell projection. It localises to the dendrite. The protein localises to the perikaryon. The protein resides in the axon. It is found in the membrane raft. In terms of biological role, cell surface receptor that plays a functionally redundant role in the inhibition of neurite outgrowth mediated by MAG. Plays a functionally redundant role in postnatal brain development. Contributes to normal axon migration across the brain midline and normal formation of the corpus callosum. Does not seem to play a significant role in regulating axon regeneration in the adult central nervous system. Protects motoneurons against apoptosis; protection against apoptosis is probably mediated by MAG. Like other family members, plays a role in restricting the number dendritic spines and the number of synapses that are formed during brain development. Signaling mediates activation of Rho and downstream reorganization of the actin cytoskeleton. This chain is Reticulon-4 receptor-like 2, found in Rattus norvegicus (Rat).